The chain runs to 458 residues: Phenylalanine-specific permease (458 aa).

At 1–27 (MKNASTVSEDTASNQEPTLHRGLHNRH) the chain is on the cytoplasmic side. The helical transmembrane segment at 28-48 (IQLIALGGAIGTGLFLGIGPA) threads the bilayer. At 49–50 (IQ) the chain is on the periplasmic side. The helical transmembrane segment at 51 to 71 (MAGPAVLLGYGVAGIIAFLIM) threads the bilayer. The Cytoplasmic segment spans residues 72–105 (RQLGEMVVEEPVSGSFAHFAYKYWGPFAGFLSGW). A helical transmembrane segment spans residues 106-126 (NYWVMFVLVGMAELTAAGIYM). Topologically, residues 127-132 (QYWFPD) are periplasmic. Residues 133–153 (VPTWIWAAAFFIIINAVNLVN) form a helical membrane-spanning segment. Residues 154 to 160 (VRLYGET) are Cytoplasmic-facing. The helical transmembrane segment at 161-181 (EFWFALIKVLAIIGMIGFGLW) threads the bilayer. Residues 182-196 (LLFSGHGGEKASIDN) lie on the Periplasmic side of the membrane. Residues 197 to 217 (LWRYGGFFATGWNGLILSLAV) form a helical membrane-spanning segment. Topologically, residues 218–250 (IMFSFGGLELIGITAAEARDPEKSIPKAVNQVV) are cytoplasmic. The chain crosses the membrane as a helical span at residues 251-271 (YRILLFYIGSLVVLLALYPWV). Topologically, residues 272–288 (EVKSNSSPFVMIFHNLD) are periplasmic. The helical transmembrane segment at 289-309 (SNVVASALNFVILVASLSVYN) threads the bilayer. The Cytoplasmic portion of the chain corresponds to 310-341 (SGVYSNSRMLFGLSVQGNAPKFLTRVSRRGVP). A helical transmembrane segment spans residues 342-362 (INSLMLSGAITSLVVLINYLL). Residues 363 to 367 (PQKAF) lie on the Periplasmic side of the membrane. A helical membrane pass occupies residues 368–388 (GLLMALVVATLLLNWIMICLA). The Cytoplasmic segment spans residues 389–411 (HLRFRAAMRRQGRETQFKALLYP). The helical transmembrane segment at 412–432 (FGNYLCIAFLGMILLLMCTMD) threads the bilayer. The Periplasmic portion of the chain corresponds to 433 to 434 (DM). The helical transmembrane segment at 435–455 (RLSAILLPVWIVFLFMAFKTL) threads the bilayer. Residues 456 to 458 (RRK) lie on the Cytoplasmic side of the membrane.

Belongs to the amino acid-polyamine-organocation (APC) superfamily. Amino acid transporter (AAT) (TC 2.A.3.1) family.

It is found in the cell inner membrane. It catalyses the reaction L-phenylalanine(in) + H(+)(in) = L-phenylalanine(out) + H(+)(out). Its function is as follows. Permease that is involved in the active transport across the cytoplasmic membrane of phenylalanine. Can also transport tyrosine, but not tryptophan. The protein is Phenylalanine-specific permease of Escherichia coli (strain K12).